The chain runs to 187 residues: dTTP/UTP pyrophosphatase (187 aa).

D64 acts as the Proton acceptor in catalysis.

The protein belongs to the Maf family. YhdE subfamily. A divalent metal cation is required as a cofactor.

It is found in the cytoplasm. It carries out the reaction dTTP + H2O = dTMP + diphosphate + H(+). The catalysed reaction is UTP + H2O = UMP + diphosphate + H(+). Its function is as follows. Nucleoside triphosphate pyrophosphatase that hydrolyzes dTTP and UTP. May have a dual role in cell division arrest and in preventing the incorporation of modified nucleotides into cellular nucleic acids. This is dTTP/UTP pyrophosphatase from Leptospira interrogans serogroup Icterohaemorrhagiae serovar Lai (strain 56601).